A 253-amino-acid polypeptide reads, in one-letter code: Imidazole glycerol phosphate synthase subunit HisF (253 aa).

Active-site residues include aspartate 11 and aspartate 130.

This sequence belongs to the HisA/HisF family. Heterodimer of HisH and HisF.

It is found in the cytoplasm. It carries out the reaction 5-[(5-phospho-1-deoxy-D-ribulos-1-ylimino)methylamino]-1-(5-phospho-beta-D-ribosyl)imidazole-4-carboxamide + L-glutamine = D-erythro-1-(imidazol-4-yl)glycerol 3-phosphate + 5-amino-1-(5-phospho-beta-D-ribosyl)imidazole-4-carboxamide + L-glutamate + H(+). It participates in amino-acid biosynthesis; L-histidine biosynthesis; L-histidine from 5-phospho-alpha-D-ribose 1-diphosphate: step 5/9. Its function is as follows. IGPS catalyzes the conversion of PRFAR and glutamine to IGP, AICAR and glutamate. The HisF subunit catalyzes the cyclization activity that produces IGP and AICAR from PRFAR using the ammonia provided by the HisH subunit. This chain is Imidazole glycerol phosphate synthase subunit HisF, found in Thermotoga sp. (strain RQ2).